The chain runs to 101 residues: Phosphoribosyl-AMP cyclohydrolase (101 aa).

A Mg(2+)-binding site is contributed by aspartate 71. Position 72 (cysteine 72) interacts with Zn(2+). Positions 73 and 75 each coordinate Mg(2+). Cysteine 88 and cysteine 95 together coordinate Zn(2+).

It belongs to the PRA-CH family. In terms of assembly, homodimer. It depends on Mg(2+) as a cofactor. The cofactor is Zn(2+).

Its subcellular location is the cytoplasm. The catalysed reaction is 1-(5-phospho-beta-D-ribosyl)-5'-AMP + H2O = 1-(5-phospho-beta-D-ribosyl)-5-[(5-phospho-beta-D-ribosylamino)methylideneamino]imidazole-4-carboxamide. It participates in amino-acid biosynthesis; L-histidine biosynthesis; L-histidine from 5-phospho-alpha-D-ribose 1-diphosphate: step 3/9. In terms of biological role, catalyzes the hydrolysis of the adenine ring of phosphoribosyl-AMP. This is Phosphoribosyl-AMP cyclohydrolase from Bacillus cereus (strain AH820).